The sequence spans 226 residues: Pyridoxal 5'-phosphate synthase subunit Pdx2 (226 aa).

L-glutamine is bound at residue G52–S54. Catalysis depends on C87, which acts as the Nucleophile. Residues R124 and I156 to R157 each bind L-glutamine. Active-site charge relay system residues include H199 and E201.

It belongs to the glutaminase PdxT/SNO family. In terms of assembly, in the presence of PdxS, forms a dodecamer of heterodimers. Only shows activity in the heterodimer.

The enzyme catalyses aldehydo-D-ribose 5-phosphate + D-glyceraldehyde 3-phosphate + L-glutamine = pyridoxal 5'-phosphate + L-glutamate + phosphate + 3 H2O + H(+). It carries out the reaction L-glutamine + H2O = L-glutamate + NH4(+). The protein operates within cofactor biosynthesis; pyridoxal 5'-phosphate biosynthesis. Its function is as follows. Catalyzes the hydrolysis of glutamine to glutamate and ammonia as part of the biosynthesis of pyridoxal 5'-phosphate. The resulting ammonia molecule is channeled to the active site of PdxS. This is Pyridoxal 5'-phosphate synthase subunit Pdx2 from Plasmodium berghei.